The following is a 365-amino-acid chain: MFEINPVKNRIQDLSDRTAVLRGYLDYDAKKERLEEVNAELEQPDVWNEPERAQALGKERSTLEEIVTTIDQLEQGLEDVSGLLELAVEADDEETFNETIAELEVLDGKLGQLEFRRMFSGEYDRANCYLDLQAGSGGTEAQDWASMLLRMYLRWAESRGFKTEIIEESDGDVAGLKSATVKIIGEYAFGWLRTETGVHRLVRKSPFDSGGRRHTSFSSAFVYPEVDDDIDIEINPADLRIDVYRASGAGGQHVNKTESAVRITHIPTNIVTQCQNDRSQHKNKDQAMKQLKAKLYEFEMQKKNADKQVLEDNKSDIGWGSQIRSYVLDDSRIKDLRTGVETRNTQAVLDGDLDKFIEASLKAGL.

Gln252 is modified (N5-methylglutamine).

The protein belongs to the prokaryotic/mitochondrial release factor family. In terms of processing, methylated by PrmC. Methylation increases the termination efficiency of RF2.

It is found in the cytoplasm. Functionally, peptide chain release factor 2 directs the termination of translation in response to the peptide chain termination codons UGA and UAA. The sequence is that of Peptide chain release factor 2 from Yersinia pseudotuberculosis serotype O:1b (strain IP 31758).